The primary structure comprises 393 residues: Homoserine O-succinyltransferase (393 aa).

One can recognise an AB hydrolase-1 domain in the interval 62–372 (NAVLVCHALN…PHGHDAFLLD (311 aa)). The active-site Nucleophile is the serine 168. Residue arginine 238 participates in substrate binding. Active-site residues include aspartate 333 and histidine 366. Substrate is bound at residue aspartate 367.

It belongs to the AB hydrolase superfamily. MetX family. As to quaternary structure, homodimer.

It is found in the cytoplasm. It carries out the reaction L-homoserine + succinyl-CoA = O-succinyl-L-homoserine + CoA. Its pathway is amino-acid biosynthesis; L-methionine biosynthesis via de novo pathway; O-succinyl-L-homoserine from L-homoserine: step 1/1. Functionally, transfers a succinyl group from succinyl-CoA to L-homoserine, forming succinyl-L-homoserine. This is Homoserine O-succinyltransferase from Cupriavidus taiwanensis (strain DSM 17343 / BCRC 17206 / CCUG 44338 / CIP 107171 / LMG 19424 / R1) (Ralstonia taiwanensis (strain LMG 19424)).